The chain runs to 332 residues: Glycerol-3-phosphate dehydrogenase [NAD(P)+] (332 aa).

3 residues coordinate NADPH: W11, R30, and K108. Sn-glycerol 3-phosphate is bound by residues K108, G137, and S139. A141 provides a ligand contact to NADPH. Sn-glycerol 3-phosphate is bound by residues K192, D245, S255, R256, and N257. Catalysis depends on K192, which acts as the Proton acceptor. Position 256 (R256) interacts with NADPH. NADPH contacts are provided by V280 and E282.

Belongs to the NAD-dependent glycerol-3-phosphate dehydrogenase family.

The protein resides in the cytoplasm. The catalysed reaction is sn-glycerol 3-phosphate + NAD(+) = dihydroxyacetone phosphate + NADH + H(+). The enzyme catalyses sn-glycerol 3-phosphate + NADP(+) = dihydroxyacetone phosphate + NADPH + H(+). Its pathway is membrane lipid metabolism; glycerophospholipid metabolism. Functionally, catalyzes the reduction of the glycolytic intermediate dihydroxyacetone phosphate (DHAP) to sn-glycerol 3-phosphate (G3P), the key precursor for phospholipid synthesis. The chain is Glycerol-3-phosphate dehydrogenase [NAD(P)+] from Burkholderia pseudomallei (strain 1710b).